Here is a 437-residue protein sequence, read N- to C-terminus: tRNA modification GTPase MnmE (437 aa).

Positions 21, 80, and 120 each coordinate (6S)-5-formyl-5,6,7,8-tetrahydrofolate. The TrmE-type G domain occupies glycine 218–glycine 361. Asparagine 228 contacts K(+). Residues asparagine 228–threonine 233, serine 247–threonine 253, and aspartate 272–glycine 275 contribute to the GTP site. Position 232 (serine 232) interacts with Mg(2+). K(+) contacts are provided by serine 247, isoleucine 249, and threonine 252. Threonine 253 is a Mg(2+) binding site. Residue lysine 437 coordinates (6S)-5-formyl-5,6,7,8-tetrahydrofolate.

The protein belongs to the TRAFAC class TrmE-Era-EngA-EngB-Septin-like GTPase superfamily. TrmE GTPase family. In terms of assembly, homodimer. Heterotetramer of two MnmE and two MnmG subunits. It depends on K(+) as a cofactor.

The protein resides in the cytoplasm. Exhibits a very high intrinsic GTPase hydrolysis rate. Involved in the addition of a carboxymethylaminomethyl (cmnm) group at the wobble position (U34) of certain tRNAs, forming tRNA-cmnm(5)s(2)U34. This is tRNA modification GTPase MnmE from Methylobacterium sp. (strain 4-46).